Reading from the N-terminus, the 546-residue chain is Methionine--tRNA ligase (546 aa).

The 'HIGH' region motif lies at 15 to 25; it reads PYANGPIHLGH. Zn(2+)-binding residues include cysteine 146, cysteine 149, cysteine 159, and cysteine 162. Residues 332–336 carry the 'KMSKS' region motif; that stretch reads KMSKS. Lysine 335 serves as a coordination point for ATP.

This sequence belongs to the class-I aminoacyl-tRNA synthetase family. MetG type 1 subfamily. Monomer. The cofactor is Zn(2+).

Its subcellular location is the cytoplasm. The enzyme catalyses tRNA(Met) + L-methionine + ATP = L-methionyl-tRNA(Met) + AMP + diphosphate. Functionally, is required not only for elongation of protein synthesis but also for the initiation of all mRNA translation through initiator tRNA(fMet) aminoacylation. This Coxiella burnetii (strain RSA 331 / Henzerling II) protein is Methionine--tRNA ligase.